Consider the following 281-residue polypeptide: NADPH-dependent 7-cyano-7-deazaguanine reductase (281 aa).

87–89 contacts substrate; that stretch reads IES. 89-90 provides a ligand contact to NADPH; that stretch reads SK. The active-site Thioimide intermediate is Cys188. The active-site Proton donor is Asp195. 227 to 228 lines the substrate pocket; sequence HE. 256–257 contacts NADPH; that stretch reads RG. The tract at residues 261–281 is disordered; sequence INPYRSTEQAKPDHNHRMARQ. A compositionally biased stretch (basic and acidic residues) spans 268–281; the sequence is EQAKPDHNHRMARQ.

This sequence belongs to the GTP cyclohydrolase I family. QueF type 2 subfamily. In terms of assembly, homodimer.

Its subcellular location is the cytoplasm. The catalysed reaction is 7-aminomethyl-7-carbaguanine + 2 NADP(+) = 7-cyano-7-deazaguanine + 2 NADPH + 3 H(+). It functions in the pathway tRNA modification; tRNA-queuosine biosynthesis. Functionally, catalyzes the NADPH-dependent reduction of 7-cyano-7-deazaguanine (preQ0) to 7-aminomethyl-7-deazaguanine (preQ1). This chain is NADPH-dependent 7-cyano-7-deazaguanine reductase, found in Vibrio vulnificus (strain CMCP6).